Here is a 62-residue protein sequence, read N- to C-terminus: UPF0434 protein BP2767 (62 aa).

This sequence belongs to the UPF0434 family.

This Bordetella pertussis (strain Tohama I / ATCC BAA-589 / NCTC 13251) protein is UPF0434 protein BP2767.